A 149-amino-acid polypeptide reads, in one-letter code: UPF0208 membrane protein VSAL_I2111 (149 aa).

2 consecutive transmembrane segments (helical) span residues 41–61 and 69–89; these read FAVKVMPAVAVISVLTQMVFN and SIIIALFAISMPLQGFWWLGN.

This sequence belongs to the UPF0208 family.

It localises to the cell inner membrane. The protein is UPF0208 membrane protein VSAL_I2111 of Aliivibrio salmonicida (strain LFI1238) (Vibrio salmonicida (strain LFI1238)).